The chain runs to 595 residues: Aspartate--tRNA(Asp/Asn) ligase (595 aa).

Position 171 (E171) interacts with L-aspartate. The segment at 195–198 is aspartate; the sequence is QLFK. R217 provides a ligand contact to L-aspartate. ATP contacts are provided by residues 217–219 and Q226; that span reads RDE. L-aspartate is bound at residue H454. ATP is bound at residue E488. R495 lines the L-aspartate pocket. 540–543 provides a ligand contact to ATP; it reads GLDR.

Belongs to the class-II aminoacyl-tRNA synthetase family. Type 1 subfamily. As to quaternary structure, homodimer.

The protein resides in the cytoplasm. It catalyses the reaction tRNA(Asx) + L-aspartate + ATP = L-aspartyl-tRNA(Asx) + AMP + diphosphate. Functionally, aspartyl-tRNA synthetase with relaxed tRNA specificity since it is able to aspartylate not only its cognate tRNA(Asp) but also tRNA(Asn). Reaction proceeds in two steps: L-aspartate is first activated by ATP to form Asp-AMP and then transferred to the acceptor end of tRNA(Asp/Asn). The chain is Aspartate--tRNA(Asp/Asn) ligase from Bordetella petrii (strain ATCC BAA-461 / DSM 12804 / CCUG 43448).